An 82-amino-acid chain; its full sequence is Cytochrome b559 subunit alpha (82 aa).

A helical membrane pass occupies residues 22–36 (IIHAVTLPAIFIAGF). A heme-binding site is contributed by His-24.

It belongs to the PsbE/PsbF family. In terms of assembly, heterodimer of an alpha subunit and a beta subunit. PSII is composed of 1 copy each of membrane proteins PsbA, PsbB, PsbC, PsbD, PsbE, PsbF, PsbH, PsbI, PsbJ, PsbK, PsbL, PsbM, PsbT, PsbX, PsbY, Psb30/Ycf12, peripheral proteins PsbO, CyanoQ (PsbQ), PsbU, PsbV and a large number of cofactors. It forms dimeric complexes. The cofactor is heme b.

The protein localises to the cellular thylakoid membrane. Functionally, this b-type cytochrome is tightly associated with the reaction center of photosystem II (PSII). PSII is a light-driven water:plastoquinone oxidoreductase that uses light energy to abstract electrons from H(2)O, generating O(2) and a proton gradient subsequently used for ATP formation. It consists of a core antenna complex that captures photons, and an electron transfer chain that converts photonic excitation into a charge separation. This Prochlorococcus marinus (strain SARG / CCMP1375 / SS120) protein is Cytochrome b559 subunit alpha.